The sequence spans 457 residues: Argininosuccinate lyase (457 aa).

This sequence belongs to the lyase 1 family. Argininosuccinate lyase subfamily.

The protein localises to the cytoplasm. It carries out the reaction 2-(N(omega)-L-arginino)succinate = fumarate + L-arginine. Its pathway is amino-acid biosynthesis; L-arginine biosynthesis; L-arginine from L-ornithine and carbamoyl phosphate: step 3/3. This chain is Argininosuccinate lyase, found in Psychrobacter arcticus (strain DSM 17307 / VKM B-2377 / 273-4).